The following is a 684-amino-acid chain: MGDNSLSNEAITADNILKDAFSQKKQIAATTKADILDLEELKDWQRRKRTEYETVLKRNRLDLRQWMRYAQFEFDQKDIRRARSIYERALLVDHGFIPLWIQYIDSEIKWKNINHARNLLDRATNALPRVDKLWFKYLLLEESLGNQGIVRGIYTRWCSFEPGPDAWDSFIEFETRCLNFENVRNIYSKFVLVHPQIDTWLKWVRFEQTHGDISSVRTVFSFALDTLTSFSGTPLVDIERVIGSFASWEASQGEYERSRTLYRLAVERWPISEALKEQQIQFEKKFGSSKNMEDIVIAKRKAEYEQYLKSDPYHYSTWWVYIDLVEEKYQEQLTSAFQSFIELAKPKSLVKDSSWKRYIRICVRYLVYLELTINDLPTIRSVYQDILDIIPHKKFTFGKLWIMYAEFEIRQNNLLKARKILGVSLGKSPKPKVFKYYINLEIRLKEFDRVRKLYEKYIDFNPSSVQSWLDYAELEENLGDEDRSRGIYDISMSNNVGLSESDQLIVIQRYIAFETDAAEYEKARELYEKYLILSRYDVNIWINQALFESTIPTETQLIAYQQSHQDGNFDDDGEEEFSFEITPENKHHTRAIFEKAISYFKEHNEDKKRQQVLQSLLEYEKVHGNQETLEKVNARQPSLVREKVTIDNIEQESYKLDFPDDRVAQPPIARNLLALAKQWEKNSS.

HAT repeat units follow at residues 43–75 (DWQR…FEFD), 77–109 (KDIR…SEIK), 111–143 (KNIN…LEES), 145–176 (GNQG…FETR), 178–209 (LNFE…FEQT), 211–251 (GDIS…WEAS), 253–285 (GEYE…FEKK), 295–327 (IVIA…LVEE), 332–364 (QLTS…ICVR), 374–410 (NDLP…FEIR), 412–443 (NNLL…LEIR), 445–477 (KEFD…LEEN), 518–550 (AEYE…FEST), and 584–622 (ENKH…YEKV).

Belongs to the crooked-neck family. Associated with the spliceosome.

It localises to the nucleus. In terms of biological role, involved in pre-mRNA splicing and cell cycle progression. Required for the spliceosome assembly and initiation of the DNA replication. The polypeptide is Pre-mRNA-splicing factor CLF1 (CLF1) (Kluyveromyces lactis (strain ATCC 8585 / CBS 2359 / DSM 70799 / NBRC 1267 / NRRL Y-1140 / WM37) (Yeast)).